Reading from the N-terminus, the 128-residue chain is uncharacterized protein (128 aa).

A run of 2 helical transmembrane segments spans residues 45 to 65 and 95 to 115; these read GYFH…LFPF and FMSH…LSCF.

The protein resides in the membrane. This is an uncharacterized protein from Saccharomyces cerevisiae (strain ATCC 204508 / S288c) (Baker's yeast).